The primary structure comprises 525 residues: Probable lipid II flippase MurJ (525 aa).

Transmembrane regions (helical) follow at residues 10–30 (LLKS…LGLV), 32–52 (DVVV…FFAN), 100–120 (VLVT…TALF), 140–160 (LASL…FVAL), 171–191 (FAVS…CAWY), 203–223 (LAIG…PFLI), 247–267 (MIPA…DSFV), 285–305 (LLEF…LPAL), 330–350 (FLGI…LMVL), 368–388 (LLAY…APGY), 402–422 (IIAM…YGYV), 423–443 (GLAV…YRGL), 455–475 (TVWF…ALLW), and 495–515 (LTGL…LLGV).

The protein belongs to the MurJ/MviN family.

Its subcellular location is the cell inner membrane. It functions in the pathway cell wall biogenesis; peptidoglycan biosynthesis. Its function is as follows. Involved in peptidoglycan biosynthesis. Transports lipid-linked peptidoglycan precursors from the inner to the outer leaflet of the cytoplasmic membrane. This chain is Probable lipid II flippase MurJ, found in Vibrio cholerae serotype O1 (strain ATCC 39315 / El Tor Inaba N16961).